The following is an 836-amino-acid chain: Granulocyte colony-stimulating factor receptor (836 aa).

The signal sequence occupies residues 1 to 24; that stretch reads MARLGNCSLTWAALIILLLPGSLE. The Ig-like C2-type domain maps to 25–117; the sequence is ECGHISVSAP…SLQILDQVEL (93 aa). Residues 25–627 are Extracellular-facing; it reads ECGHISVSAP…TLTPEGSELH (603 aa). Disulfide bonds link cysteine 26–cysteine 52 and cysteine 46–cysteine 101. 4 N-linked (GlcNAc...) asparagine glycosylation sites follow: asparagine 51, asparagine 93, asparagine 128, and asparagine 134. Fibronectin type-III domains follow at residues 125 to 230, 233 to 332, 334 to 430, 431 to 528, and 530 to 623; these read IPHN…LEPP, RTMD…TTER, PTVR…SRGP, ALTR…MAPS, and APEL…TPEG. Cystine bridges form between cysteine 131–cysteine 142, cysteine 167–cysteine 218, cysteine 177–cysteine 186, cysteine 248–cysteine 295, and cysteine 266–cysteine 309. The WSXWS motif motif lies at 318–322; that stretch reads WSDWS. N-linked (GlcNAc...) asparagine glycans are attached at residues asparagine 389, asparagine 474, asparagine 579, and asparagine 610. The chain crosses the membrane as a helical span at residues 628-650; it reads IILGLFGLLLLLTCLCGTAWLCC. Residues 651–836 are Cytoplasmic-facing; that stretch reads SPNRKNPLWP…VHGMEALGSF (186 aa). A Box 1 motif motif is present at residues 658 to 666; it reads LWPSVPDPA.

It belongs to the type I cytokine receptor family. Type 2 subfamily. In terms of assembly, homodimer. The dimeric receptor binds two CSF3 molecules. Interacts with CEACAM1; down-regulates the CSF3R-STAT3 pathway through recruitment of PTPN6 that dephosphorylates CSF3R. N-glycosylated. As to expression, one or several isoforms have been found in myelogenous leukemia cell line KG-1, leukemia U-937 cell line, in bone marrow cells, placenta, and peripheral blood granulocytes. Isoform GCSFR-2 is found only in leukemia U-937 cells. Isoform GCSFR-3 is highly expressed in placenta.

Its subcellular location is the secreted. It is found in the cell membrane. Functionally, receptor for granulocyte colony-stimulating factor (CSF3), essential for granulocytic maturation. Plays a crucial role in the proliferation, differentiation and survival of cells along the neutrophilic lineage. In addition it may function in some adhesion or recognition events at the cell surface. In Homo sapiens (Human), this protein is Granulocyte colony-stimulating factor receptor (CSF3R).